The sequence spans 275 residues: Phosphite transport system permease protein PtxC (275 aa).

5 consecutive transmembrane segments (helical) span residues 30–50, 88–108, 136–156, 221–241, and 249–269; these read LGQV…VGLL, LAMS…VAFV, LIMG…GVLA, ASTV…MGSL, and VAAI…FSGV. An ABC transmembrane type-1 domain is found at 84–267; the sequence is LIDTLAMSIA…AMVTLVDAFS (184 aa).

This sequence belongs to the binding-protein-dependent transport system permease family.

The protein resides in the cell inner membrane. Functionally, probably forms part of a binding-protein-dependent phosphite transporter. Probably responsible for the translocation of the substrate across the membrane. The polypeptide is Phosphite transport system permease protein PtxC (ptxC) (Stutzerimonas stutzeri (Pseudomonas stutzeri)).